The following is a 119-amino-acid chain: Large ribosomal subunit protein bL20 (119 aa).

It belongs to the bacterial ribosomal protein bL20 family.

Binds directly to 23S ribosomal RNA and is necessary for the in vitro assembly process of the 50S ribosomal subunit. It is not involved in the protein synthesizing functions of that subunit. The polypeptide is Large ribosomal subunit protein bL20 (Gloeobacter violaceus (strain ATCC 29082 / PCC 7421)).